The primary structure comprises 106 residues: Thioredoxin (106 aa).

One can recognise a Thioredoxin domain in the interval 2-106 (SHYIELTEEN…LKEQLNKLLG (105 aa)). Cys-30 and Cys-33 are disulfide-bonded.

It belongs to the thioredoxin family.

Functionally, participates in various redox reactions through the reversible oxidation of its active center dithiol to a disulfide and catalyzes dithiol-disulfide exchange reactions. The sequence is that of Thioredoxin (trxA) from Helicobacter pylori (strain J99 / ATCC 700824) (Campylobacter pylori J99).